The primary structure comprises 153 residues: Ribosome maturation factor RimP (153 aa).

Belongs to the RimP family.

It localises to the cytoplasm. Its function is as follows. Required for maturation of 30S ribosomal subunits. The polypeptide is Ribosome maturation factor RimP (Clostridium botulinum (strain ATCC 19397 / Type A)).